Consider the following 276-residue polypeptide: Diaminopimelate epimerase (276 aa).

Residues Asn13, Gln46, and Asn66 each coordinate substrate. Catalysis depends on Cys75, which acts as the Proton donor. Substrate-binding positions include 76 to 77 (GN), Asn159, Asn192, and 210 to 211 (ER). The Proton acceptor role is filled by Cys219. 220–221 (GS) provides a ligand contact to substrate.

Belongs to the diaminopimelate epimerase family. Homodimer.

It is found in the cytoplasm. The enzyme catalyses (2S,6S)-2,6-diaminopimelate = meso-2,6-diaminopimelate. Its pathway is amino-acid biosynthesis; L-lysine biosynthesis via DAP pathway; DL-2,6-diaminopimelate from LL-2,6-diaminopimelate: step 1/1. Catalyzes the stereoinversion of LL-2,6-diaminopimelate (L,L-DAP) to meso-diaminopimelate (meso-DAP), a precursor of L-lysine and an essential component of the bacterial peptidoglycan. This is Diaminopimelate epimerase from Coxiella burnetii (strain CbuK_Q154) (Coxiella burnetii (strain Q154)).